The following is a 121-amino-acid chain: uncharacterized protein (121 aa).

The disordered stretch occupies residues 1–121 (MGQVLSICSS…QQEREQIKWD (121 aa)). Glycine 2 carries N-myristoyl glycine lipidation. Residue cysteine 8 is the site of S-palmitoyl cysteine attachment. Basic and acidic residues-rich tracts occupy residues 11–23 (KSKE…EKPT), 73–83 (AAEKRNIEKKK), 90–105 (RQLE…EHLQ), and 112–121 (QQEREQIKWD).

The protein to yeast YGL108C. Post-translationally, myristoylated. In terms of processing, the N-myristoylated protein is further palmitoylated.

Its subcellular location is the cytoplasm. It localises to the cytosol. This is an uncharacterized protein from Schizosaccharomyces pombe (strain 972 / ATCC 24843) (Fission yeast).